The chain runs to 354 residues: 5,10-methenyltetrahydromethanopterin hydrogenase (354 aa).

It belongs to the HMD family.

The catalysed reaction is 5,10-methenyl-5,6,7,8-tetrahydromethanopterin + H2 = 5,10-methylenetetrahydromethanopterin + H(+). Its pathway is one-carbon metabolism; methanogenesis from CO(2); 5,10-methylene-5,6,7,8-tetrahydromethanopterin from 5,10-methenyl-5,6,7,8-tetrahydromethanopterin (hydrogen route): step 1/1. Its function is as follows. Catalyzes the reversible reduction of methenyl-H(4)MPT(+) to methylene-H(4)MPT. In Methanococcus maripaludis (strain C7 / ATCC BAA-1331), this protein is 5,10-methenyltetrahydromethanopterin hydrogenase.